A 702-amino-acid polypeptide reads, in one-letter code: Polyribonucleotide nucleotidyltransferase (702 aa).

The Mg(2+) site is built by D485 and D491. The KH domain occupies 552–611 (PKTSTLQIDPEKIRDVIGAGGKVINKIIADTGVKIDIKEDGLVYVSSAESEGVKEAVKII). In terms of domain architecture, S1 motif spans 621 to 689 (GEIYLGKVTK…SQGRINLSRK (69 aa)).

It belongs to the polyribonucleotide nucleotidyltransferase family. Mg(2+) is required as a cofactor.

The protein resides in the cytoplasm. It carries out the reaction RNA(n+1) + phosphate = RNA(n) + a ribonucleoside 5'-diphosphate. In terms of biological role, involved in mRNA degradation. Catalyzes the phosphorolysis of single-stranded polyribonucleotides processively in the 3'- to 5'-direction. This is Polyribonucleotide nucleotidyltransferase from Clostridium perfringens (strain 13 / Type A).